The sequence spans 501 residues: uncharacterized protein (501 aa).

A BAR domain is found at 14 to 237; that stretch reads EKFGFDRQKT…GFSKKRDNVN (224 aa). A Phosphothreonine modification is found at Thr-285. 2 disordered regions span residues 302 to 321 and 329 to 414; these read IASSNRTQHTEDNYNKDVSD and SAVD…RSYS. Residues 309 to 320 show a composition bias toward basic and acidic residues; that stretch reads QHTEDNYNKDVS. The span at 390–402 shows a compositional bias: polar residues; that stretch reads SQCNVSPSPSNIS. Ser-414 carries the phosphoserine modification. Positions 421-487 constitute an SH3 domain; the sequence is SSRKVVRMKY…PSNYCVPAHP (67 aa).

The protein localises to the cytoplasm. This is an uncharacterized protein from Schizosaccharomyces pombe (strain 972 / ATCC 24843) (Fission yeast).